The sequence spans 454 residues: Protoheme IX farnesyltransferase 1 (454 aa).

Residues 1–186 (MRTTGFSGLL…AYFELTKPRL (186 aa)) form a unknown region. Transmembrane regions (helical) follow at residues 9–29 (LLSA…TAAL), 59–79 (GVAA…WSET), 87–107 (LALA…VATG), and 113–133 (LHLF…AWHL). Residues 137-164 (TGSDDAPESPPELAPPVDEEPAATEQPA) are disordered. 9 helical membrane passes run 186-206 (LMWL…TPTV), 209-229 (VVFT…FNHV), 251-271 (VPVA…LWAF), 276-296 (LLAA…YTLI), 300-320 (NTVQ…LIGY), 321-341 (AAVT…IFLW), 377-397 (HIVF…AVTD), 398-418 (LGWL…WAVV), and 433-453 (FHAS…DSLA). The protoheme IX prenyltransferase stretch occupies residues 187 to 451 (MWLLCLVAGA…LVLVAILIDS (265 aa)).

This sequence in the C-terminal section; belongs to the UbiA prenyltransferase family. Protoheme IX farnesyltransferase subfamily.

The protein localises to the cell membrane. The catalysed reaction is heme b + (2E,6E)-farnesyl diphosphate + H2O = Fe(II)-heme o + diphosphate. The protein operates within porphyrin-containing compound metabolism; heme O biosynthesis; heme O from protoheme: step 1/1. Converts heme B (protoheme IX) to heme O by substitution of the vinyl group on carbon 2 of heme B porphyrin ring with a hydroxyethyl farnesyl side group. This Natronomonas pharaonis (strain ATCC 35678 / DSM 2160 / CIP 103997 / JCM 8858 / NBRC 14720 / NCIMB 2260 / Gabara) (Halobacterium pharaonis) protein is Protoheme IX farnesyltransferase 1 (ctaB1).